Here is a 1296-residue protein sequence, read N- to C-terminus: Histone-lysine N-methyltransferase EHMT1 (1296 aa).

2 disordered regions span residues 1-111 and 170-200; these read MAAA…NHVT and PQTPTTAPTVPGEGSADTEDRKPTASGTDVR. N-acetylalanine is present on Ala-2. Basic and acidic residues predominate over residues 14–31; it reads QETKQDCCMKTELLREDT. Lys-23 is covalently cross-linked (Glycyl lysine isopeptide (Lys-Gly) (interchain with G-Cter in SUMO1); alternate). Residue Lys-23 forms a Glycyl lysine isopeptide (Lys-Gly) (interchain with G-Cter in SUMO2); alternate linkage. Over residues 77–89 the composition is skewed to polar residues; sequence NTRASPQEGTNRV. Basic and acidic residues predominate over residues 97–106; the sequence is VSERDTEVGK. Glycyl lysine isopeptide (Lys-Gly) (interchain with G-Cter in SUMO2) cross-links involve residues Lys-191, Lys-229, Lys-232, Lys-315, and Lys-325. The interval 341–470 is disordered; sequence SLEMDSEDED…SSPGSMEQAA (130 aa). The segment covering 342–360 has biased composition (acidic residues); sequence LEMDSEDEDSDELEDDEDH. Positions 371 to 391 are enriched in basic and acidic residues; that stretch reads EDSRTSKESMSETDRAAKMDG. Positions 392–414 are enriched in acidic residues; the sequence is DSEEEQESPDTGEDEDGGDESDL. Lys-430 participates in a covalent cross-link: Glycyl lysine isopeptide (Lys-Gly) (interchain with G-Cter in SUMO2). Residue Ser-433 is modified to Phosphoserine. Positions 438-450 are enriched in basic residues; the sequence is PARKRRRRSRKKP. A Phosphoserine modification is found at Ser-481. Residues Lys-559, Lys-644, Lys-659, and Lys-729 each participate in a glycyl lysine isopeptide (Lys-Gly) (interchain with G-Cter in SUMO2) cross-link. Positions 653–714 are disordered; sequence LAPGQEKSLA…PTSGLSQGPG (62 aa). ANK repeat units follow at residues 735–764, 770–799, 803–832, 836–866, 870–899, 903–932, 936–965, and 969–1002; these read FHPKQLYFSARQGELQKVLLMLVDGIDPNF, SKRSPLHAAAEAGHVDICHMLVQAGANIDT, DQRTPLMEAAENNHLDAVKYLIKAGAQVDP, EGSTCLHLAAKKGHYDVVQYLLSNGQMDVNC, GGWTPMIWATEYKHVELVKLLLSKGSDINI, EENICLHWAAFSGCVDIAEILLAAKCDLHA, HGDSPLHIAARENRYDCVVLFLSRDSDVTL, and EGETPLQCASLSSQVWSALQMSKALRDSAPDKPV. Positions 903–905 are histone H3K9me binding; sequence EEN. Ser-1046 is subject to Phosphoserine. Positions 1058–1121 constitute a Pre-SET domain; it reads QYCVCVDDCS…NCRNRVVQNG (64 aa). Zn(2+)-binding residues include Cys-1060, Cys-1062, Cys-1066, Cys-1071, Cys-1073, Cys-1103, Cys-1107, Cys-1109, and Cys-1113. Residues 1124 to 1241 form the SET domain; the sequence is ARLQLYRTQD…AGEQLGFDYG (118 aa). Residues 1134-1136, Tyr-1171, and 1198-1199 contribute to the S-adenosyl-L-methionine site; these read MGW and NH. The segment at 1160 to 1179 is interaction with histone H3; it reads DSEADVREEDSYLFDLDNKD. Cys-1201 is a Zn(2+) binding site. The tract at residues 1240-1243 is interaction with histone H3; the sequence is YGER. Cys-1254 is a Zn(2+) binding site. Residue Arg-1255 participates in S-adenosyl-L-methionine binding. Positions 1256 and 1261 each coordinate Zn(2+). The tract at residues 1271–1296 is disordered; that stretch reads RQASAAQEPQENGLPDTSSAAAADPL.

It belongs to the class V-like SAM-binding methyltransferase superfamily. Interacts with WIZ. Part of the E2F6.com-1 complex in G0 phase composed of E2F6, MGA, MAX, TFDP1, CBX3, BAT8, EHMT1, RING1, RNF2, MBLR, L3MBTL2 and YAF2. Interacts with MPHOSPH8. Interacts with CDYL. Interacts with REST only in the presence of CDYL. Part of a complex containing at least CDYL, REST, WIZ, SETB1, EHMT1 and EHMT2. Heterodimer; heterodimerizes with EHMT2. Interacts (via ANK repeats) with RELA (when monomethylated at 'Lys-310'). Interacts with Baz2b. As to expression, ubiquitous.

The protein localises to the nucleus. The protein resides in the chromosome. The catalysed reaction is N(6)-methyl-L-lysyl(9)-[histone H3] + S-adenosyl-L-methionine = N(6),N(6)-dimethyl-L-lysyl(9)-[histone H3] + S-adenosyl-L-homocysteine + H(+). The enzyme catalyses L-lysyl(9)-[histone H3] + S-adenosyl-L-methionine = N(6)-methyl-L-lysyl(9)-[histone H3] + S-adenosyl-L-homocysteine + H(+). Methyltransferase activity is inhibited by BIX-01294. Efficiently inhibited by compound E72, a BIX-01294 derivative in which the diazepane ring and the benzyl are replaced with a 3-dimethylaminopropyl and a 5-aminopentyl group at sites B and C, respectively. Functionally, histone methyltransferase that specifically mono- and dimethylates 'Lys-9' of histone H3 (H3K9me1 and H3K9me2, respectively) in euchromatin. H3K9me represents a specific tag for epigenetic transcriptional repression by recruiting HP1 proteins to methylated histones. Also weakly methylates 'Lys-27' of histone H3 (H3K27me). Also required for DNA methylation, the histone methyltransferase activity is not required for DNA methylation, suggesting that these 2 activities function independently. Probably targeted to histone H3 by different DNA-binding proteins like E2F6, MGA, MAX and/or DP1. During G0 phase, it probably contributes to silencing of MYC- and E2F-responsive genes, suggesting a role in G0/G1 transition in cell cycle. In addition to the histone methyltransferase activity, also methylates non-histone proteins: mediates dimethylation of 'Lys-373' of p53/TP53. Represses the expression of mitochondrial function-related genes, perhaps by occupying their promoter regions, working in concert with probable chromatin reader Baz2b. In Mus musculus (Mouse), this protein is Histone-lysine N-methyltransferase EHMT1 (Ehmt1).